The primary structure comprises 319 residues: Glucokinase (319 aa).

An ATP-binding site is contributed by 8 to 13; the sequence is GDIGGT.

This sequence belongs to the bacterial glucokinase family.

It localises to the cytoplasm. The catalysed reaction is D-glucose + ATP = D-glucose 6-phosphate + ADP + H(+). This is Glucokinase from Chromohalobacter salexigens (strain ATCC BAA-138 / DSM 3043 / CIP 106854 / NCIMB 13768 / 1H11).